Consider the following 66-residue polypeptide: Large ribosomal subunit protein bL33c (66 aa).

This sequence belongs to the bacterial ribosomal protein bL33 family.

It localises to the plastid. It is found in the chloroplast. The chain is Large ribosomal subunit protein bL33c from Morus indica (Mulberry).